The chain runs to 174 residues: NADH-quinone oxidoreductase subunit B 1 (174 aa).

[4Fe-4S] cluster-binding residues include C53, C54, C118, and C148.

It belongs to the complex I 20 kDa subunit family. NDH-1 is composed of 14 different subunits. Subunits NuoB, C, D, E, F, and G constitute the peripheral sector of the complex. It depends on [4Fe-4S] cluster as a cofactor.

It is found in the cell inner membrane. It catalyses the reaction a quinone + NADH + 5 H(+)(in) = a quinol + NAD(+) + 4 H(+)(out). Functionally, NDH-1 shuttles electrons from NADH, via FMN and iron-sulfur (Fe-S) centers, to quinones in the respiratory chain. The immediate electron acceptor for the enzyme in this species is believed to be ubiquinone. Couples the redox reaction to proton translocation (for every two electrons transferred, four hydrogen ions are translocated across the cytoplasmic membrane), and thus conserves the redox energy in a proton gradient. The chain is NADH-quinone oxidoreductase subunit B 1 from Cereibacter sphaeroides (strain KD131 / KCTC 12085) (Rhodobacter sphaeroides).